The following is a 301-amino-acid chain: Homoserine O-acetyltransferase (301 aa).

C142 serves as the catalytic Acyl-thioester intermediate. Residues K163 and S192 each coordinate substrate. H235 serves as the catalytic Proton acceptor. Residue E237 is part of the active site. R249 is a substrate binding site.

It belongs to the MetA family.

The protein resides in the cytoplasm. It carries out the reaction L-homoserine + acetyl-CoA = O-acetyl-L-homoserine + CoA. The protein operates within amino-acid biosynthesis; L-methionine biosynthesis via de novo pathway; O-acetyl-L-homoserine from L-homoserine: step 1/1. In terms of biological role, transfers an acetyl group from acetyl-CoA to L-homoserine, forming acetyl-L-homoserine. In Bacillus thuringiensis subsp. konkukian (strain 97-27), this protein is Homoserine O-acetyltransferase.